The primary structure comprises 363 residues: Peptide chain release factor 1 (363 aa).

N5-methylglutamine is present on Q237. The segment covering 284 to 297 (ERAKQQSERSEQRR) has biased composition (basic and acidic residues). Residues 284–306 (ERAKQQSERSEQRRLAVGSGDRS) are disordered.

The protein belongs to the prokaryotic/mitochondrial release factor family. Methylated by PrmC. Methylation increases the termination efficiency of RF1.

It localises to the cytoplasm. Functionally, peptide chain release factor 1 directs the termination of translation in response to the peptide chain termination codons UAG and UAA. The chain is Peptide chain release factor 1 from Halorhodospira halophila (strain DSM 244 / SL1) (Ectothiorhodospira halophila (strain DSM 244 / SL1)).